The primary structure comprises 156 residues: Small ribosomal subunit protein uS7 (156 aa).

Belongs to the universal ribosomal protein uS7 family. As to quaternary structure, part of the 30S ribosomal subunit. Contacts proteins S9 and S11.

In terms of biological role, one of the primary rRNA binding proteins, it binds directly to 16S rRNA where it nucleates assembly of the head domain of the 30S subunit. Is located at the subunit interface close to the decoding center, probably blocks exit of the E-site tRNA. The polypeptide is Small ribosomal subunit protein uS7 (Bordetella bronchiseptica (strain ATCC BAA-588 / NCTC 13252 / RB50) (Alcaligenes bronchisepticus)).